We begin with the raw amino-acid sequence, 209 residues long: Urease accessory protein UreE (209 aa).

Over residues 170 to 196 (EHHGHSHSHSHDHDHDHDHDHDHDHQH) the composition is skewed to basic and acidic residues. A disordered region spans residues 170–209 (EHHGHSHSHSHDHDHDHDHDHDHDHQHGPSCSHGHHHGHR).

The protein belongs to the UreE family.

It localises to the cytoplasm. In terms of biological role, involved in urease metallocenter assembly. Binds nickel. Probably functions as a nickel donor during metallocenter assembly. The polypeptide is Urease accessory protein UreE (Burkholderia mallei (strain NCTC 10247)).